The primary structure comprises 420 residues: Serine hydroxymethyltransferase (420 aa).

Residues L121 and 125 to 127 contribute to the (6S)-5,6,7,8-tetrahydrofolate site; that span reads GHL. N6-(pyridoxal phosphate)lysine is present on K230.

It belongs to the SHMT family. In terms of assembly, homodimer. The cofactor is pyridoxal 5'-phosphate.

The protein localises to the cytoplasm. The catalysed reaction is (6R)-5,10-methylene-5,6,7,8-tetrahydrofolate + glycine + H2O = (6S)-5,6,7,8-tetrahydrofolate + L-serine. It participates in one-carbon metabolism; tetrahydrofolate interconversion. The protein operates within amino-acid biosynthesis; glycine biosynthesis; glycine from L-serine: step 1/1. In terms of biological role, catalyzes the reversible interconversion of serine and glycine with tetrahydrofolate (THF) serving as the one-carbon carrier. This reaction serves as the major source of one-carbon groups required for the biosynthesis of purines, thymidylate, methionine, and other important biomolecules. Also exhibits THF-independent aldolase activity toward beta-hydroxyamino acids, producing glycine and aldehydes, via a retro-aldol mechanism. The sequence is that of Serine hydroxymethyltransferase from Streptomyces avermitilis (strain ATCC 31267 / DSM 46492 / JCM 5070 / NBRC 14893 / NCIMB 12804 / NRRL 8165 / MA-4680).